The sequence spans 89 residues: Small ribosomal subunit protein bS20 (89 aa).

This sequence belongs to the bacterial ribosomal protein bS20 family.

Binds directly to 16S ribosomal RNA. The polypeptide is Small ribosomal subunit protein bS20 (Wolbachia sp. subsp. Brugia malayi (strain TRS)).